The following is a 201-amino-acid chain: Protein MJ0810 (201 aa).

The region spanning 7-197 (EEGTFAVRYA…EVEPRGEVIE (191 aa)) is the AMMECR1 domain.

This Methanocaldococcus jannaschii (strain ATCC 43067 / DSM 2661 / JAL-1 / JCM 10045 / NBRC 100440) (Methanococcus jannaschii) protein is Protein MJ0810.